We begin with the raw amino-acid sequence, 21 residues long: Short neurotoxin E1 (21 aa).

The tract at residues 1 to 21 (MICYNHQSSEPPTTXTCSEGQ) is disordered.

Contains 4 disulfide bonds. In terms of tissue distribution, expressed by the venom gland.

The protein resides in the secreted. In terms of biological role, binds to muscle nicotinic acetylcholine receptor (nAChR) and inhibit acetylcholine from binding to the receptor, thereby impairing neuromuscular transmission. In Micrurus pyrrhocryptus (Coral snake), this protein is Short neurotoxin E1.